Consider the following 120-residue polypeptide: NAD(P)H-quinone oxidoreductase subunit 3 (120 aa).

The next 3 helical transmembrane spans lie at 6 to 26 (GYDA…LALV), 64 to 84 (MFAL…PWAV), and 89 to 109 (LGLL…VALA).

Belongs to the complex I subunit 3 family. In terms of assembly, NDH-1 can be composed of about 15 different subunits; different subcomplexes with different compositions have been identified which probably have different functions.

Its subcellular location is the cellular thylakoid membrane. The catalysed reaction is a plastoquinone + NADH + (n+1) H(+)(in) = a plastoquinol + NAD(+) + n H(+)(out). The enzyme catalyses a plastoquinone + NADPH + (n+1) H(+)(in) = a plastoquinol + NADP(+) + n H(+)(out). NDH-1 shuttles electrons from an unknown electron donor, via FMN and iron-sulfur (Fe-S) centers, to quinones in the respiratory and/or the photosynthetic chain. The immediate electron acceptor for the enzyme in this species is believed to be plastoquinone. Couples the redox reaction to proton translocation, and thus conserves the redox energy in a proton gradient. Cyanobacterial NDH-1 also plays a role in inorganic carbon-concentration. The chain is NAD(P)H-quinone oxidoreductase subunit 3 from Prochlorococcus marinus (strain MIT 9211).